The primary structure comprises 179 residues: Adenine phosphoribosyltransferase (179 aa).

The protein belongs to the purine/pyrimidine phosphoribosyltransferase family. As to quaternary structure, homodimer.

The protein resides in the cytoplasm. The catalysed reaction is AMP + diphosphate = 5-phospho-alpha-D-ribose 1-diphosphate + adenine. It participates in purine metabolism; AMP biosynthesis via salvage pathway; AMP from adenine: step 1/1. Its function is as follows. Catalyzes a salvage reaction resulting in the formation of AMP, that is energically less costly than de novo synthesis. The chain is Adenine phosphoribosyltransferase from Nitrobacter winogradskyi (strain ATCC 25391 / DSM 10237 / CIP 104748 / NCIMB 11846 / Nb-255).